A 320-amino-acid polypeptide reads, in one-letter code: Cytochrome f (320 aa).

Positions Met-1–Ala-35 are cleaved as a signal peptide. 4 residues coordinate heme: Tyr-36, Cys-56, Cys-59, and His-60. A helical membrane pass occupies residues Val-286–Lys-306.

Belongs to the cytochrome f family. In terms of assembly, the 4 large subunits of the cytochrome b6-f complex are cytochrome b6, subunit IV (17 kDa polypeptide, petD), cytochrome f and the Rieske protein, while the 4 small subunits are PetG, PetL, PetM and PetN. The complex functions as a dimer. Requires heme as cofactor.

The protein resides in the plastid. It localises to the chloroplast thylakoid membrane. In terms of biological role, component of the cytochrome b6-f complex, which mediates electron transfer between photosystem II (PSII) and photosystem I (PSI), cyclic electron flow around PSI, and state transitions. The protein is Cytochrome f of Helianthus annuus (Common sunflower).